The primary structure comprises 637 residues: Choline O-acetyltransferase (637 aa).

A compositionally biased stretch (basic and acidic residues) spans 1–13; the sequence is MPVSKREQSKDTG. A disordered region spans residues 1-20; sequence MPVSKREQSKDTGDPCALPK. H329 acts as the Proton acceptor in catalysis. Residues 407-419, S445, and Q545 each bind CoA; that span reads GKEF…MSPD.

Belongs to the carnitine/choline acetyltransferase family.

The catalysed reaction is choline + acetyl-CoA = acetylcholine + CoA. In terms of biological role, catalyzes the reversible synthesis of acetylcholine (ACh) from acetyl CoA and choline at cholinergic synapses. In Danio rerio (Zebrafish), this protein is Choline O-acetyltransferase (chat).